A 203-amino-acid polypeptide reads, in one-letter code: Glutathione-specific gamma-glutamylcyclotransferase (203 aa).

12–17 contacts substrate; it reads VFGYGS. Glutamate 105 (proton acceptor) is an active-site residue.

Belongs to the gamma-glutamylcyclotransferase family. ChaC subfamily.

It is found in the cytoplasm. Its subcellular location is the nucleus. It catalyses the reaction glutathione = L-cysteinylglycine + 5-oxo-L-proline. In terms of biological role, gamma-glutamylcyclotransferase acting specifically on glutathione, but not on other gamma-glutamyl peptides. Allows utilization of gluthathione through subsequent cleavage of the Cys-Gly dipeptide by Cys-Gly metallodipeptidase dug1. This chain is Glutathione-specific gamma-glutamylcyclotransferase, found in Schizosaccharomyces pombe (strain 972 / ATCC 24843) (Fission yeast).